Here is a 342-residue protein sequence, read N- to C-terminus: MEPNNSFRVDSEFRYTLFPIFYSIVFVLGVIANSYVLWVFARLYPSKKFNEIKIFMVNLTMADLLFLVTLPLWIVYYYNQGDWILPKFLCNLAGCFFFINTYCSVAFLAVITYNRFQAVTRPIKTAQATTRKRGILLSLIIWVSIVGAASYFFVLDSTNREPNKTGSANITRCFEHYEKGSIPVLTIHIFLVFSFFLVFLIILFCNLVIIRTLLTQQVQIQRNAEVKRRALWMVCTVLAVFIICFVPHHLVQLPWTLAELGFQDTDFHQAINDAHQVTLCLLSTNCVLDPIIYCFLTKKFRKHLTEKLYSMRESRKCSRATSETGTEVVMQLKDVPVKSLKY.

The Extracellular portion of the chain corresponds to 1–16; sequence MEPNNSFRVDSEFRYT. Residue N4 is glycosylated (N-linked (GlcNAc...) asparagine). Residues 17–38 form a helical membrane-spanning segment; it reads LFPIFYSIVFVLGVIANSYVLW. Residues 39–54 are Cytoplasmic-facing; the sequence is VFARLYPSKKFNEIKI. The chain crosses the membrane as a helical span at residues 55-74; sequence FMVNLTMADLLFLVTLPLWI. Residues 75 to 91 lie on the Extracellular side of the membrane; the sequence is VYYYNQGDWILPKFLCN. Cysteines 90 and 173 form a disulfide. The helical transmembrane segment at 92–113 threads the bilayer; it reads LAGCFFFINTYCSVAFLAVITY. The Cytoplasmic portion of the chain corresponds to 114–133; sequence NRFQAVTRPIKTAQATTRKR. A helical membrane pass occupies residues 134-155; the sequence is GILLSLIIWVSIVGAASYFFVL. Residues 156–184 are Extracellular-facing; that stretch reads DSTNREPNKTGSANITRCFEHYEKGSIPV. 2 N-linked (GlcNAc...) asparagine glycosylation sites follow: N163 and N169. Residues 185-205 form a helical membrane-spanning segment; it reads LTIHIFLVFSFFLVFLIILFC. At 206-233 the chain is on the cytoplasmic side; it reads NLVIIRTLLTQQVQIQRNAEVKRRALWM. Residues 234–254 traverse the membrane as a helical segment; that stretch reads VCTVLAVFIICFVPHHLVQLP. At 255–276 the chain is on the extracellular side; sequence WTLAELGFQDTDFHQAINDAHQ. Residues 277 to 296 traverse the membrane as a helical segment; sequence VTLCLLSTNCVLDPIIYCFL. Residues 297–342 lie on the Cytoplasmic side of the membrane; that stretch reads TKKFRKHLTEKLYSMRESRKCSRATSETGTEVVMQLKDVPVKSLKY.

It belongs to the G-protein coupled receptor 1 family. In terms of assembly, interacts with ARRB1. Found in oviductal epithelial and stroma cells. Levels in the oviduct are raised at days 2-4 of both pregnancy and of the estrus cycle. In the endometrium, localization is predominantly to the apical borders of glandular and luminal epithelial cells. Expressed at lower levels in endometrial stromal cells. Levels in the endometrium are increased at day 20 of pregnancy (at protein level).

It localises to the cell membrane. Its function is as follows. Receptor for platelet activating factor, a chemotactic phospholipid mediator that possesses potent inflammatory, smooth-muscle contractile and hypotensive activity. Seems to mediate its action via a G protein that activates a phosphatidylinositol-calcium second messenger system. May be involved in the morphological and physical modifications of the oviduct and uterus during the estrus cycle and early pregnancy. In Bos taurus (Bovine), this protein is Platelet-activating factor receptor.